Consider the following 232-residue polypeptide: dTTP/UTP pyrophosphatase (232 aa).

Catalysis depends on aspartate 103, which acts as the Proton acceptor.

The protein belongs to the Maf family. YhdE subfamily. A divalent metal cation is required as a cofactor.

The protein resides in the cytoplasm. It catalyses the reaction dTTP + H2O = dTMP + diphosphate + H(+). The enzyme catalyses UTP + H2O = UMP + diphosphate + H(+). Nucleoside triphosphate pyrophosphatase that hydrolyzes dTTP and UTP. May have a dual role in cell division arrest and in preventing the incorporation of modified nucleotides into cellular nucleic acids. This Bartonella henselae (strain ATCC 49882 / DSM 28221 / CCUG 30454 / Houston 1) (Rochalimaea henselae) protein is dTTP/UTP pyrophosphatase.